A 406-amino-acid chain; its full sequence is Tryptophan synthase beta chain (406 aa).

The residue at position 99 (K99) is an N6-(pyridoxal phosphate)lysine.

This sequence belongs to the TrpB family. In terms of assembly, tetramer of two alpha and two beta chains. Pyridoxal 5'-phosphate serves as cofactor.

It carries out the reaction (1S,2R)-1-C-(indol-3-yl)glycerol 3-phosphate + L-serine = D-glyceraldehyde 3-phosphate + L-tryptophan + H2O. The protein operates within amino-acid biosynthesis; L-tryptophan biosynthesis; L-tryptophan from chorismate: step 5/5. Functionally, the beta subunit is responsible for the synthesis of L-tryptophan from indole and L-serine. This chain is Tryptophan synthase beta chain (trpB), found in Caulobacter vibrioides (strain ATCC 19089 / CIP 103742 / CB 15) (Caulobacter crescentus).